The chain runs to 513 residues: Maturase K (513 aa).

The protein belongs to the intron maturase 2 family. MatK subfamily.

It localises to the plastid. The protein localises to the chloroplast. In terms of biological role, usually encoded in the trnK tRNA gene intron. Probably assists in splicing its own and other chloroplast group II introns. This chain is Maturase K, found in Pinus resinosa (Red pine).